A 463-amino-acid polypeptide reads, in one-letter code: ATP-dependent protease ATPase subunit HslU (463 aa).

ATP contacts are provided by residues Val-19, 61–66 (GVGKTE), Asp-277, Glu-341, and Arg-413.

The protein belongs to the ClpX chaperone family. HslU subfamily. A double ring-shaped homohexamer of HslV is capped on each side by a ring-shaped HslU homohexamer. The assembly of the HslU/HslV complex is dependent on binding of ATP.

The protein resides in the cytoplasm. Functionally, ATPase subunit of a proteasome-like degradation complex; this subunit has chaperone activity. The binding of ATP and its subsequent hydrolysis by HslU are essential for unfolding of protein substrates subsequently hydrolyzed by HslV. HslU recognizes the N-terminal part of its protein substrates and unfolds these before they are guided to HslV for hydrolysis. In Shouchella clausii (strain KSM-K16) (Alkalihalobacillus clausii), this protein is ATP-dependent protease ATPase subunit HslU.